A 311-amino-acid chain; its full sequence is Phospho-N-acetylmuramoyl-pentapeptide-transferase (311 aa).

10 helical membrane passes run 2-22 (ENNV…IEGF), 48-68 (GTPT…LLNF), 74-94 (SFLI…DDFM), 104-124 (ITAV…VYFI), 144-164 (LGWF…NAVN), 168-188 (GVDG…LIVG), 192-212 (VVYL…WHPA), 214-234 (IFMG…SFAL), 237-257 (LELF…SVII), and 288-308 (KIAF…IIGW).

This sequence belongs to the glycosyltransferase 4 family. MraY subfamily. Mg(2+) serves as cofactor.

It localises to the cell inner membrane. The catalysed reaction is UDP-N-acetyl-alpha-D-muramoyl-L-alanyl-gamma-D-glutamyl-meso-2,6-diaminopimeloyl-D-alanyl-D-alanine + di-trans,octa-cis-undecaprenyl phosphate = di-trans,octa-cis-undecaprenyl diphospho-N-acetyl-alpha-D-muramoyl-L-alanyl-D-glutamyl-meso-2,6-diaminopimeloyl-D-alanyl-D-alanine + UMP. The protein operates within cell wall biogenesis; peptidoglycan biosynthesis. Functionally, catalyzes the initial step of the lipid cycle reactions in the biosynthesis of the cell wall peptidoglycan: transfers peptidoglycan precursor phospho-MurNAc-pentapeptide from UDP-MurNAc-pentapeptide onto the lipid carrier undecaprenyl phosphate, yielding undecaprenyl-pyrophosphoryl-MurNAc-pentapeptide, known as lipid I. The polypeptide is Phospho-N-acetylmuramoyl-pentapeptide-transferase (Kosmotoga olearia (strain ATCC BAA-1733 / DSM 21960 / TBF 19.5.1)).